A 348-amino-acid polypeptide reads, in one-letter code: Phosphate acyltransferase (348 aa).

It belongs to the PlsX family. Homodimer. Probably interacts with PlsY.

Its subcellular location is the cytoplasm. The catalysed reaction is a fatty acyl-[ACP] + phosphate = an acyl phosphate + holo-[ACP]. It participates in lipid metabolism; phospholipid metabolism. Its function is as follows. Catalyzes the reversible formation of acyl-phosphate (acyl-PO(4)) from acyl-[acyl-carrier-protein] (acyl-ACP). This enzyme utilizes acyl-ACP as fatty acyl donor, but not acyl-CoA. This is Phosphate acyltransferase from Rhizobium etli (strain ATCC 51251 / DSM 11541 / JCM 21823 / NBRC 15573 / CFN 42).